The primary structure comprises 520 residues: MDVALEDNHIALLQHRAKNSGNTVLFKLPILRGSEPPQEWNHITVAEFAAEVDRVAIFVMTELKARGIPPRSAVTVLYSGSRYQDLIYAIALARASYIPQMCPHILTHPGVIFALMEKAGSKIILYDPSLEPATTDCPYPKMALNPIETIDSSSTINSDSALPTIEDLSSGHADVCFFYLTSGSTSGSPKVVPLTQKFVSTYYKTQFGIWLDGRRFDTQNAFLSRGSICAVAPIIQYFGCLYTGSCIVQPSKMRFSTEELLTLVNVCGLNRMTTFGTWLAPHIQAAKKDPAALKLLQEMRTVSYGGVPISIADDDWCFQNGIPLMDMYATTECGTLMVSAPGKPARFMQPVPGISYRFDPFTDTTTGADNPASTQLLKLILLADSPQIPQPQLLSEDGNFHTGDLFEKQLDGSYLFRGRGDDWIKSEDSRFIDTKAIEEKINDVCSDLVKGCIVVGHLRPSPALFIEAYHDSISTISEDGLKELVLRRLEDFNARQLKHERITDKRLIFIVDEGNLPRTV.

180–191 (LTSGSTSGSPKV) contributes to the ATP binding site. Residues 397 to 447 (DGNFHTGDLFEKQLDGSYLFRGRGDDWIKSEDSRFIDTKAIEEKINDVCSD) carry the FACS motif.

The protein belongs to the ATP-dependent AMP-binding enzyme family. Mg(2+) is required as a cofactor.

It functions in the pathway secondary metabolite biosynthesis. In terms of biological role, AMP-binding domain-containing enzyme; part of the gene cluster that mediates the biosynthesis of the psychoactive metabolites ibotenic acid and muscimol. The first committed step is glutamate hydroxylation by the 2-oxoglutarate-dependent dioxygenase iboH, and the last step is decarboxylation of ibotenic acid to muscimol by the decarboxylase iboD. The order of the intermediate reactions is somewhat ambiguous. IboA likely activates the carboxylic acid at position 5 to introduce an amide bond, and the flavin monooxygenase iboF generates the N-O bond. There are several options for the latter step. One option is that iboF directly hydroxylates the amide nitrogen formed by iboA to produce a hydroxamic acid species. Another option is that iboF hydroxylates an external N-containing compound, whose resulting N-O bond is subsequently introduced into the hydroxyglutamate scaffold. The paralogous PLP-dependent cystathionine gamma-synthase-like enzymes iboG1 and iboG2 are likely involved in substitution of the OH group at position 3 by the O-N moiety. The first cyclic intermediate is most probably tricholomic acid which is likely desaturated to ibotenic acid by the cytochrome P450 monooxygenase iboC. This is AMP-binding domain-containing enzyme iboA from Amanita muscaria (strain Koide BX008).